A 319-amino-acid chain; its full sequence is tRNA(Ile)-lysidine synthase (319 aa).

32 to 37 serves as a coordination point for ATP; it reads SGGSDS.

The protein belongs to the tRNA(Ile)-lysidine synthase family.

The protein resides in the cytoplasm. The enzyme catalyses cytidine(34) in tRNA(Ile2) + L-lysine + ATP = lysidine(34) in tRNA(Ile2) + AMP + diphosphate + H(+). Functionally, ligates lysine onto the cytidine present at position 34 of the AUA codon-specific tRNA(Ile) that contains the anticodon CAU, in an ATP-dependent manner. Cytidine is converted to lysidine, thus changing the amino acid specificity of the tRNA from methionine to isoleucine. The sequence is that of tRNA(Ile)-lysidine synthase from Chlamydia pneumoniae (Chlamydophila pneumoniae).